The chain runs to 432 residues: MSVLIETTVGDLVIDLFVKEAPKTCENFLKLCKLKYYNFCPFYNIQHNYTCQTGDPLGPTGDGGRCVWNVLNKGTRFFKAEFNPSLVHNKMGLVSMSTATISSRDDKLLVCGSQFIITLSDNLEGLDERYPIYGQVAEGFDTLLKINDAICDEEGQPYRDIRIKHTIILDDPFEDPPDLVEPLRSPSPTPEQLATVRIGENEQIESETSEDKLQREKEMEAEAEAVTLEMIGDLPFAHVAPPENVLFVCKLNPVTQDEDLELIFSRFGKIISCQVIRDKETGDSLQYAFIEFDNKESVEKAYFKMQNVLIDDSRIHVDFSQSVARYRQYYNSNRDRKRSSSRSDDREYHRRSDGRYDRSNYRDDYRHRRKERDHRDDQSSFRNERFSNYYGDDRSYHKRRNTGNKNCDDHLRDKSPERRYRYDRRYRDDRYR.

The PPIase cyclophilin-type domain maps to 1–168; it reads MSVLIETTVG…RDIRIKHTII (168 aa). Phosphoserine is present on Ser206. Positions 244 to 322 constitute an RRM domain; it reads NVLFVCKLNP…SRIHVDFSQS (79 aa). The interval 330-432 is disordered; sequence YNSNRDRKRS…DRRYRDDRYR (103 aa). Composition is skewed to basic and acidic residues over residues 341 to 366, 373 to 395, and 406 to 432; these read SRSDDREYHRRSDGRYDRSNYRDDYR, DHRDDQSSFRNERFSNYYGDDRS, and NCDDHLRDKSPERRYRYDRRYRDDRYR.

Belongs to the cyclophilin-type PPIase family. PPIL4 subfamily.

Its subcellular location is the nucleus. It carries out the reaction [protein]-peptidylproline (omega=180) = [protein]-peptidylproline (omega=0). PPIases accelerate the folding of proteins. It catalyzes the cis-trans isomerization of proline imidic peptide bonds in oligopeptides. This Schizosaccharomyces pombe (strain 972 / ATCC 24843) (Fission yeast) protein is Peptidyl-prolyl cis-trans isomerase cyp6 (cyp6).